Here is a 331-residue protein sequence, read N- to C-terminus: Phenylalanine--tRNA ligase alpha subunit (331 aa).

Position 252 (glutamate 252) interacts with Mg(2+).

This sequence belongs to the class-II aminoacyl-tRNA synthetase family. Phe-tRNA synthetase alpha subunit type 1 subfamily. Tetramer of two alpha and two beta subunits. Mg(2+) is required as a cofactor.

The protein localises to the cytoplasm. The enzyme catalyses tRNA(Phe) + L-phenylalanine + ATP = L-phenylalanyl-tRNA(Phe) + AMP + diphosphate + H(+). This Xanthomonas euvesicatoria pv. vesicatoria (strain 85-10) (Xanthomonas campestris pv. vesicatoria) protein is Phenylalanine--tRNA ligase alpha subunit.